Consider the following 128-residue polypeptide: Flagellar basal body rod protein FlgB (128 aa).

This sequence belongs to the flagella basal body rod proteins family. In terms of assembly, the basal body constitutes a major portion of the flagellar organelle and consists of a number of rings mounted on a central rod. In Gram-negative bacteria, at least four rings, L, P, S and M are present, whereas Gram-positive bacteria lack the L and P rings. The rod consists of about 26 subunits of FlgG in the distal portion, and FlgB, FlgC and FlgF build up the proximal portion of the rod with about 6 subunits each. Rod assembly occurs by export via the flagellum-specific pathway of its constituent proteins and by their incorporation into the rod structure in the probable order of FlgB, FlgC, FlgF and FlgG. Another protein, FliE, also assembles onto the stable rod structure.

The protein localises to the bacterial flagellum basal body. In terms of biological role, structural component of flagellum, the bacterial motility apparatus. Part of the rod structure of flagellar basal body. This Cereibacter sphaeroides (strain ATCC 17029 / ATH 2.4.9) (Rhodobacter sphaeroides) protein is Flagellar basal body rod protein FlgB.